The primary structure comprises 300 residues: uncharacterized protein (300 aa).

Disordered stretches follow at residues 167 to 186 (DVFL…HHEH) and 224 to 244 (ADGS…DASH). Over residues 224–236 (ADGSSLETSSMSS) the composition is skewed to polar residues.

This is an uncharacterized protein from Rattus norvegicus (Rat).